Consider the following 499-residue polypeptide: Hepatic triacylglycerol lipase (499 aa).

The signal sequence occupies residues 1 to 21 (MGSPLCVPIFLAVCILIQSST). N-linked (GlcNAc...) asparagine glycosylation is present at Asn-78. Ser-168 functions as the Nucleophile in the catalytic mechanism. Asp-194 functions as the Charge relay system in the catalytic mechanism. Residues 254–277 (CHFLELYKHIAQHGLNALSQTIKC) are essential for determining substrate specificity. Catalysis depends on His-279, which acts as the Charge relay system. Positions 352–486 (YHYQFKIQFI…HPTQEKNFVR (135 aa)) constitute a PLAT domain. N-linked (GlcNAc...) asparagine glycosylation occurs at Asn-397.

It belongs to the AB hydrolase superfamily. Lipase family. In terms of assembly, homodimer.

Its subcellular location is the secreted. It catalyses the reaction a triacylglycerol + H2O = a diacylglycerol + a fatty acid + H(+). The catalysed reaction is a 1-acyl-sn-glycero-3-phosphocholine + H2O = sn-glycerol 3-phosphocholine + a fatty acid + H(+). It carries out the reaction a 1,2-diacyl-sn-glycero-3-phosphocholine + H2O = a 2-acyl-sn-glycero-3-phosphocholine + a fatty acid + H(+). The enzyme catalyses 1,2,3-tri-(9Z-octadecenoyl)-glycerol + H2O = di-(9Z)-octadecenoylglycerol + (9Z)-octadecenoate + H(+). It catalyses the reaction 1,2-di-(9Z-octadecenoyl)-sn-glycero-3-phosphocholine + H2O = (9Z-octadecenoyl)-sn-glycero-3-phosphocholine + (9Z)-octadecenoate + H(+). The catalysed reaction is 1,2,3-tributanoylglycerol + H2O = dibutanoylglycerol + butanoate + H(+). It carries out the reaction 1,2-dihexadecanoyl-sn-glycero-3-phosphocholine + H2O = hexadecanoyl-sn-glycero-3-phosphocholine + hexadecanoate + H(+). The enzyme catalyses 1,2-di-(9Z-octadecenoyl)-sn-glycerol + H2O = 2-(9Z-octadecenoyl)-glycerol + (9Z)-octadecenoate + H(+). It catalyses the reaction 1,2,3-tri-(9Z-octadecenoyl)-glycerol + H2O = 2,3-di-(9Z)-octadecenoyl-sn-glycerol + (9Z)-octadecenoate + H(+). The catalysed reaction is 1-(9Z-octadecenoyl)-sn-glycero-3-phospho-L-serine + H2O = sn-glycero-3-phospho-L-serine + (9Z)-octadecenoate + H(+). It carries out the reaction 1-hexadecanoyl-sn-glycero-3-phosphocholine + H2O = sn-glycerol 3-phosphocholine + hexadecanoate + H(+). The enzyme catalyses 1,3-di-(9Z-octadecenoyl)-glycerol + H2O = 3-(9Z-octadecenoyl)-sn-glycerol + (9Z)-octadecenoate + H(+). Its function is as follows. Catalyzes the hydrolysis of triglycerides and phospholipids present in circulating plasma lipoproteins, including chylomicrons, intermediate density lipoproteins (IDL), low density lipoproteins (LDL) of large size and high density lipoproteins (HDL), releasing free fatty acids (FFA) and smaller lipoprotein particles. Also exhibits lysophospholipase activity. Can hydrolyze both neutral lipid and phospholipid substrates but shows a greater binding affinity for neutral lipid substrates than phospholipid substrates. In native LDL, preferentially hydrolyzes the phosphatidylcholine species containing polyunsaturated fatty acids at sn-2 position. In Oryctolagus cuniculus (Rabbit), this protein is Hepatic triacylglycerol lipase (LIPC).